The primary structure comprises 612 residues: MDDEETAEIEDVNVLVPATGGEGPVDGASAMGAVQETENVNEESEAQREEDVVRDYMMELIRQSDEQLAADAPDAAASTGSDGSGDDDEQPNQNEEVGAGSGEQEDEAASHDSDMSLDSPGSEDDSVVWNPHPPGWMIPPNRLHSAVDMMVTQARNSDAGIAGLLSRHHFLQRIRSIVFSQERRRSRTSEEGEASSEPPHTPPPPRSPYDVEMEEGIRFDTNLAAEHSYFGNNSSRVPGVDYLEEGSTHHMLIFLHQHILFPGEVLPFMIDGSLIDEEMQQNGLDGLIFAVGFPLMQPPEDCPNRLYGVTCQIYEKGESGRQLVFYKSRALQRIVINCDDIQGLPQYIARNPTNKCYSKVKILPEYFLPEPLKCIDMGSMSRFRDIPSMRNMYQRYQITSTPWPLDACLEYSYTDIVEKARKKLEIHKIDTMPKCPIQLSFWLVRNLHLTEKLMRSTFLTDSVNTRLQIIGSTLKDESVFYCRYCNSSLAYCSDLFAMSKHGVQTQYCNSAGYIHETNTVYRVMTHAIGYSGEPTTEFSWFPGYQWHIILCKFCAQHVGWEFKAVQPNLTPKLFFGLAGSSVRIGKLVENTPVNGSTFVVRNLLRMVSSEME.

The segment covering 1-11 (MDDEETAEIED) has biased composition (acidic residues). Disordered regions lie at residues 1-30 (MDDEETAEIEDVNVLVPATGGEGPVDGASA), 58-133 (MELI…NPHP), and 181-211 (QERRRSRTSEEGEASSEPPHTPPPPRSPYDV). Residues 69-81 (AADAPDAAASTGS) show a composition bias toward low complexity. Positions 181–190 (QERRRSRTSE) are enriched in basic and acidic residues. Positions 250-478 (HMLIFLHQHI…IIGSTLKDES (229 aa)) constitute a Lon N-terminal domain. The 110-residue stretch at 477–586 (ESVFYCRYCN…LAGSSVRIGK (110 aa)) folds into the CULT domain. Residues Cys-482, Cys-485, Cys-551, and Cys-554 each coordinate Zn(2+).

Belongs to the CRBN family. In terms of assembly, likely a component of a DCX (DDB1-CUL4-X-box) protein ligase complex. May interact with pic/DDB1. In terms of processing, ubiquitinated.

The protein localises to the nucleus. It participates in protein modification; protein ubiquitination. Functionally, substrate recognition component of a DCX (DDB1-CUL4-X-box) E3 protein ligase complex that mediates the ubiquitination and subsequent proteasomal degradation of target proteins. Has an essential role in mediating growth by negatively regulating insulin signaling. It also has a role in maintaining presynaptic function in the neuromuscular junction synapses of third-instar larvae. In Drosophila willistoni (Fruit fly), this protein is Protein cereblon.